We begin with the raw amino-acid sequence, 306 residues long: Probable zinc metalloprotease VDBG_06923 (306 aa).

The signal sequence occupies residues methionine 1–alanine 28. Zn(2+) is bound by residues aspartate 12 and glutamate 45. Asparagine 60 carries an N-linked (GlcNAc...) asparagine glycan. Aspartate 72 serves as a coordination point for Zn(2+). Residues alanine 218–threonine 306 enclose the Fibronectin type-III domain. Residues asparagine 228, asparagine 234, and asparagine 244 are each glycosylated (N-linked (GlcNAc...) asparagine).

This sequence belongs to the peptidase M28 family. M28B subfamily. It depends on Zn(2+) as a cofactor.

The protein resides in the secreted. The protein is Probable zinc metalloprotease VDBG_06923 of Verticillium alfalfae (strain VaMs.102 / ATCC MYA-4576 / FGSC 10136) (Verticillium wilt of alfalfa).